Reading from the N-terminus, the 343-residue chain is Ribosomal RNA small subunit methyltransferase C (343 aa).

The protein belongs to the methyltransferase superfamily. RsmC family. As to quaternary structure, monomer.

The protein localises to the cytoplasm. The catalysed reaction is guanosine(1207) in 16S rRNA + S-adenosyl-L-methionine = N(2)-methylguanosine(1207) in 16S rRNA + S-adenosyl-L-homocysteine + H(+). Functionally, specifically methylates the guanine in position 1207 of 16S rRNA in the 30S particle. This is Ribosomal RNA small subunit methyltransferase C from Escherichia coli O17:K52:H18 (strain UMN026 / ExPEC).